Here is a 313-residue protein sequence, read N- to C-terminus: Pyrimidine-specific ribonucleoside hydrolase RihB (313 aa).

The Proton acceptor role is filled by Asp11. Ca(2+)-binding residues include Asp11, Asp16, and Val124. Residues Gln227 and His239 each contribute to the substrate site. Ca(2+) is bound at residue Asp240.

It belongs to the IUNH family. RihB subfamily. As to quaternary structure, homotetramer. Ca(2+) serves as cofactor.

It carries out the reaction a pyrimidine ribonucleoside + H2O = a pyrimidine nucleobase + D-ribose. Its function is as follows. Hydrolyzes cytidine or uridine to ribose and cytosine or uracil, respectively. Has a clear preference for cytidine over uridine. Strictly specific for ribonucleosides. In Escherichia coli O157:H7, this protein is Pyrimidine-specific ribonucleoside hydrolase RihB.